Reading from the N-terminus, the 106-residue chain is Immunoglobulin lambda constant 6 (106 aa).

Residues 7-101 (PSVTLFPPSS…EGSTVEKTVA (95 aa)) enclose the Ig-like domain. The cysteines at positions 28 and 87 are disulfide-linked.

Immunoglobulins are composed of two identical heavy chains and two identical light chains; disulfide-linked.

Its subcellular location is the secreted. The protein resides in the cell membrane. In terms of biological role, constant region of immunoglobulin light chains. Immunoglobulins, also known as antibodies, are membrane-bound or secreted glycoproteins produced by B lymphocytes. In the recognition phase of humoral immunity, the membrane-bound immunoglobulins serve as receptors which, upon binding of a specific antigen, trigger the clonal expansion and differentiation of B lymphocytes into immunoglobulins-secreting plasma cells. Secreted immunoglobulins mediate the effector phase of humoral immunity, which results in the elimination of bound antigens. The antigen binding site is formed by the variable domain of one heavy chain, together with that of its associated light chain. Thus, each immunoglobulin has two antigen binding sites with remarkable affinity for a particular antigen. The variable domains are assembled by a process called V-(D)-J rearrangement and can then be subjected to somatic hypermutations which, after exposure to antigen and selection, allow affinity maturation for a particular antigen. The protein is Immunoglobulin lambda constant 6 of Homo sapiens (Human).